The chain runs to 373 residues: MAEAIGAVSLVGHRPSIVRITVKNELKTQKSQSIVRFPVKVDYSAKGVLSHLMTQSVKKNRMSVFPIRALAMELTKEKKKDDRLPKTWNYLDSGADDKPSLWPPENKADKPSLHNPLLRQERMGCGWLGAIFEWEGVLIEDNPDLDNQSWLTLAQEEGKSPPPAFMLRRVEGMKNEQAISEVLCWSRDPVQVRRMAKRKEEIFKALHGGVYRLRDGSQEFVNVLMNNKIPMALVSTRPRETLENAVGSIGIRKFFSVIVASEDVYRGKPDPEMFIYAAQLLDFIPERCIVFGNSNQTIEAAHDGRMKCVAVASKHPIYELGAAELVVRRLDELSIIDLKKLADTDLTEFEPELEMEKEDERELPSSAVAVDDF.

This sequence belongs to the HAD-like hydrolase superfamily. DOG/GPP family. Homodimer. It depends on Mg(2+) as a cofactor.

It is found in the plastid. Its subcellular location is the chloroplast. It catalyses the reaction 5-amino-6-(5-phospho-D-ribitylamino)uracil + H2O = 5-amino-6-(D-ribitylamino)uracil + phosphate. In terms of biological role, catalyzes the dephosphorylation of 5-amino-6-(5-phospho-D-ribitylamino)uracil, also known as ARPP, but has no activity toward flavin mononucleotide (FMN). This is 5-amino-6-(5-phospho-D-ribitylamino)uracil phosphatase, chloroplastic from Arabidopsis thaliana (Mouse-ear cress).